The chain runs to 111 residues: Cytochrome c oxidase subunit 6A1, mitochondrial (111 aa).

Residues 1–26 (MASAVLSASRVSGLLGRALPRVGRPM) constitute a mitochondrion transit peptide. Residues 27–36 (SSGAHGEEGS) lie on the Mitochondrial matrix side of the membrane. The helical transmembrane segment at 37 to 61 (ARIWKALTYFVALPGVGVSMLNVFL) threads the bilayer. Residues 62–111 (KSRHEEHERPEFVAYPHLRIRTKPFPWGDGNHTLFHNPHMNPLPTGYEDE) are Mitochondrial intermembrane-facing.

The protein belongs to the cytochrome c oxidase subunit 6A family. Component of the cytochrome c oxidase (complex IV, CIV), a multisubunit enzyme composed of 14 subunits. The complex is composed of a catalytic core of 3 subunits MT-CO1, MT-CO2 and MT-CO3, encoded in the mitochondrial DNA, and 11 supernumerary subunits COX4I, COX5A, COX5B, COX6A, COX6B, COX6C, COX7A, COX7B, COX7C, COX8 and NDUFA4, which are encoded in the nuclear genome. The complex exists as a monomer or a dimer and forms supercomplexes (SCs) in the inner mitochondrial membrane with NADH-ubiquinone oxidoreductase (complex I, CI) and ubiquinol-cytochrome c oxidoreductase (cytochrome b-c1 complex, complex III, CIII), resulting in different assemblies (supercomplex SCI(1)III(2)IV(1) and megacomplex MCI(2)III(2)IV(2)).

It is found in the mitochondrion inner membrane. It participates in energy metabolism; oxidative phosphorylation. Its function is as follows. Component of the cytochrome c oxidase, the last enzyme in the mitochondrial electron transport chain which drives oxidative phosphorylation. The respiratory chain contains 3 multisubunit complexes succinate dehydrogenase (complex II, CII), ubiquinol-cytochrome c oxidoreductase (cytochrome b-c1 complex, complex III, CIII) and cytochrome c oxidase (complex IV, CIV), that cooperate to transfer electrons derived from NADH and succinate to molecular oxygen, creating an electrochemical gradient over the inner membrane that drives transmembrane transport and the ATP synthase. Cytochrome c oxidase is the component of the respiratory chain that catalyzes the reduction of oxygen to water. Electrons originating from reduced cytochrome c in the intermembrane space (IMS) are transferred via the dinuclear copper A center (CU(A)) of subunit 2 and heme A of subunit 1 to the active site in subunit 1, a binuclear center (BNC) formed by heme A3 and copper B (CU(B)). The BNC reduces molecular oxygen to 2 water molecules unsing 4 electrons from cytochrome c in the IMS and 4 protons from the mitochondrial matrix. The chain is Cytochrome c oxidase subunit 6A1, mitochondrial (Cox6a1) from Rattus norvegicus (Rat).